We begin with the raw amino-acid sequence, 284 residues long: Thymidylate synthase (284 aa).

DUMP is bound at residue arginine 34. Histidine 64 provides a ligand contact to (6R)-5,10-methylene-5,6,7,8-tetrahydrofolate. 139–140 (RR) lines the dUMP pocket. Cysteine 159 (nucleophile) is an active-site residue. DUMP contacts are provided by residues 186 to 189 (RSAD), asparagine 197, and 227 to 229 (HIY). Position 189 (aspartate 189) interacts with (6R)-5,10-methylene-5,6,7,8-tetrahydrofolate. Alanine 283 is a (6R)-5,10-methylene-5,6,7,8-tetrahydrofolate binding site.

This sequence belongs to the thymidylate synthase family. Bacterial-type ThyA subfamily. Homodimer.

It is found in the cytoplasm. It catalyses the reaction dUMP + (6R)-5,10-methylene-5,6,7,8-tetrahydrofolate = 7,8-dihydrofolate + dTMP. Its pathway is pyrimidine metabolism; dTTP biosynthesis. In terms of biological role, catalyzes the reductive methylation of 2'-deoxyuridine-5'-monophosphate (dUMP) to 2'-deoxythymidine-5'-monophosphate (dTMP) while utilizing 5,10-methylenetetrahydrofolate (mTHF) as the methyl donor and reductant in the reaction, yielding dihydrofolate (DHF) as a by-product. This enzymatic reaction provides an intracellular de novo source of dTMP, an essential precursor for DNA biosynthesis. The sequence is that of Thymidylate synthase from Polaromonas sp. (strain JS666 / ATCC BAA-500).